A 518-amino-acid chain; its full sequence is Probable bifunctional methylthioribulose-1-phosphate dehydratase/enolase-phosphatase E1 (518 aa).

The segment at M1 to D247 is methylthioribulose-1-phosphate dehydratase. C119 provides a ligand contact to substrate. Zn(2+) contacts are provided by H137 and H139. The active-site Proton donor/acceptor; for methylthioribulose-1-phosphate dehydratase activity is the E162. Position 212 (H212) interacts with Zn(2+). The enolase-phosphatase E1 stretch occupies residues I279–I518. The Mg(2+) site is built by D282 and E284. Residues S417 to S418 and K451 contribute to the substrate site. D477 lines the Mg(2+) pocket.

The protein in the N-terminal section; belongs to the aldolase class II family. MtnB subfamily. It in the C-terminal section; belongs to the HAD-like hydrolase superfamily. MasA/MtnC family. Zn(2+) serves as cofactor. The cofactor is Mg(2+).

It carries out the reaction 5-(methylsulfanyl)-D-ribulose 1-phosphate = 5-methylsulfanyl-2,3-dioxopentyl phosphate + H2O. It catalyses the reaction 5-methylsulfanyl-2,3-dioxopentyl phosphate + H2O = 1,2-dihydroxy-5-(methylsulfanyl)pent-1-en-3-one + phosphate. Its pathway is amino-acid biosynthesis; L-methionine biosynthesis via salvage pathway; L-methionine from S-methyl-5-thio-alpha-D-ribose 1-phosphate: step 2/6. It participates in amino-acid biosynthesis; L-methionine biosynthesis via salvage pathway; L-methionine from S-methyl-5-thio-alpha-D-ribose 1-phosphate: step 3/6. It functions in the pathway amino-acid biosynthesis; L-methionine biosynthesis via salvage pathway; L-methionine from S-methyl-5-thio-alpha-D-ribose 1-phosphate: step 4/6. The protein is Probable bifunctional methylthioribulose-1-phosphate dehydratase/enolase-phosphatase E1 of Populus trichocarpa (Western balsam poplar).